A 371-amino-acid polypeptide reads, in one-letter code: Probable L-aspartate decarboxylase (371 aa).

N6-(pyridoxal phosphate)lysine is present on Lys232.

It belongs to the group II decarboxylase family. MfnA subfamily. Pyridoxal 5'-phosphate serves as cofactor.

The enzyme catalyses L-aspartate + H(+) = beta-alanine + CO2. The protein operates within cofactor biosynthesis; coenzyme A biosynthesis. Its function is as follows. Catalyzes the decarboxylation of L-aspartate to produce beta-alanine. This Pyrococcus furiosus (strain ATCC 43587 / DSM 3638 / JCM 8422 / Vc1) protein is Probable L-aspartate decarboxylase.